Reading from the N-terminus, the 152-residue chain is Aspartate carbamoyltransferase regulatory chain (152 aa).

4 residues coordinate Zn(2+): Cys108, Cys113, Cys137, and Cys140.

The protein belongs to the PyrI family. As to quaternary structure, contains catalytic and regulatory chains. Requires Zn(2+) as cofactor.

Its function is as follows. Involved in allosteric regulation of aspartate carbamoyltransferase. The sequence is that of Aspartate carbamoyltransferase regulatory chain from Neisseria meningitidis serogroup A / serotype 4A (strain DSM 15465 / Z2491).